We begin with the raw amino-acid sequence, 833 residues long: P protein (833 aa).

Over Met1–Arg172 the chain is Cytoplasmic. Residues Trp173–Tyr193 form a helical membrane-spanning segment. The Extracellular portion of the chain corresponds to Pro194–Gln325. Asn210, Asn214, and Asn269 each carry an N-linked (GlcNAc...) asparagine glycan. The helical transmembrane segment at Val326–His346 threads the bilayer. The Cytoplasmic segment spans residues Arg347 to Thr348. Residues Leu349–Pro369 form a helical membrane-spanning segment. Residues Ser370–Glu381 are Extracellular-facing. A helical transmembrane segment spans residues Thr382–Phe402. The Cytoplasmic segment spans residues Asp403–Val417. Residues Trp418 to Val438 form a helical membrane-spanning segment. Over Thr439 to Ala501 the chain is Extracellular. A helical transmembrane segment spans residues Gly502 to Leu522. The Cytoplasmic segment spans residues Arg523 to Leu617. A helical transmembrane segment spans residues Leu618–Val638. Position 639 (Pro639) is a topological domain, extracellular. A helical membrane pass occupies residues Gly640–Ala660. The Cytoplasmic portion of the chain corresponds to Asp661–Ala675. Residues Thr676–Val696 form a helical membrane-spanning segment. The Extracellular portion of the chain corresponds to Glu697–Ala718. Residues Ala719–Phe739 form a helical membrane-spanning segment. At Thr740–Pro759 the chain is on the cytoplasmic side. The helical transmembrane segment at Ala760–Ile780 threads the bilayer. The Extracellular portion of the chain corresponds to Gly781–Pro810. A helical transmembrane segment spans residues Val811–Gly831. At Trp832–Asn833 the chain is on the cytoplasmic side.

This sequence belongs to the CitM (TC 2.A.11) transporter family. As to expression, most abundant in melanocytes. Also present in neonatal and adult eye tissue presumably as a result of expression in the retinal pigmented epithelium and choroid body, known sites of melanogenesis in the eye. Small but detectable amounts also observed in fetal, neonatal and adult brain. Moderate amounts detected in adult testis and ovary. Not detected in heart, kidney, spleen, liver or thymus.

The protein resides in the melanosome membrane. It catalyses the reaction chloride(in) = chloride(out). Functionally, contributes to a melanosome-specific anion (chloride) current that modulates melanosomal pH for optimal tyrosinase activity required for melanogenesis and the melanosome maturation. One of the components of the mammalian pigmentary system. May serve as a key control point at which color variation is determined. Major determinant of eye color. Seems to regulate the post-translational processing of tyrosinase, which catalyzes the limiting reaction in melanin synthesis. This chain is P protein (Oca2), found in Mus musculus (Mouse).